The following is a 204-amino-acid chain: N-(5'-phosphoribosyl)anthranilate isomerase (204 aa).

This sequence belongs to the TrpF family.

The catalysed reaction is N-(5-phospho-beta-D-ribosyl)anthranilate = 1-(2-carboxyphenylamino)-1-deoxy-D-ribulose 5-phosphate. The protein operates within amino-acid biosynthesis; L-tryptophan biosynthesis; L-tryptophan from chorismate: step 3/5. The polypeptide is N-(5'-phosphoribosyl)anthranilate isomerase (Bacillus mycoides (strain KBAB4) (Bacillus weihenstephanensis)).